The sequence spans 440 residues: Cysteine proteinase (440 aa).

The N-terminal stretch at 1–60 (MYSSSVVSNPNERLVNNRVENDLESSDDTLSTQAKPVSRLLTRKLLLGVVVLFFLAGVSV) is a signal peptide. Positions 61-229 (VSYFLFSKYK…DEDVDLAKLT (169 aa)) are cleaved as a propeptide — activation peptide. The interval 166-182 (VKGINRFSDLTEREFYK) is involved in processing to yield active enzymes. Asn-206 carries N-linked (GlcNAc...) asparagine glycosylation. A disulfide bridge connects residues Cys-250 and Cys-291. Active-site residues include Cys-253, His-382, and Asn-404.

The protein belongs to the peptidase C1 family.

This is Cysteine proteinase from Theileria parva (East coast fever infection agent).